We begin with the raw amino-acid sequence, 340 residues long: Anthranilate phosphoribosyltransferase (340 aa).

5-phospho-alpha-D-ribose 1-diphosphate-binding positions include G83, 86 to 87 (GD), T91, 93 to 96 (NVST), 111 to 119 (KHGNRSVSS), and S123. G83 contributes to the anthranilate binding site. S95 serves as a coordination point for Mg(2+). N114 contacts anthranilate. An anthranilate-binding site is contributed by R169. 2 residues coordinate Mg(2+): D228 and E229.

Belongs to the anthranilate phosphoribosyltransferase family. Homodimer. It depends on Mg(2+) as a cofactor.

The catalysed reaction is N-(5-phospho-beta-D-ribosyl)anthranilate + diphosphate = 5-phospho-alpha-D-ribose 1-diphosphate + anthranilate. It functions in the pathway amino-acid biosynthesis; L-tryptophan biosynthesis; L-tryptophan from chorismate: step 2/5. In terms of biological role, catalyzes the transfer of the phosphoribosyl group of 5-phosphorylribose-1-pyrophosphate (PRPP) to anthranilate to yield N-(5'-phosphoribosyl)-anthranilate (PRA). The polypeptide is Anthranilate phosphoribosyltransferase (Aquifex aeolicus (strain VF5)).